The sequence spans 280 residues: Urease accessory protein UreD 3 (280 aa).

Belongs to the UreD family. UreD, UreF and UreG form a complex that acts as a GTP-hydrolysis-dependent molecular chaperone, activating the urease apoprotein by helping to assemble the nickel containing metallocenter of UreC. The UreE protein probably delivers the nickel.

The protein localises to the cytoplasm. In terms of biological role, required for maturation of urease via the functional incorporation of the urease nickel metallocenter. The protein is Urease accessory protein UreD 3 of Bradyrhizobium sp. (strain ORS 278).